Here is a 557-residue protein sequence, read N- to C-terminus: Glypican-4 (557 aa).

The first 18 residues, Met1–Ala18, serve as a signal peptide directing secretion. Position 357 is a phosphoserine (Ser357). O-linked (Xyl...) (glycosaminoglycan) serine glycosylation is found at Ser494, Ser498, and Ser500. Asn514 carries N-linked (GlcNAc...) asparagine glycosylation. Ser529 carries GPI-anchor amidated serine lipidation. A propeptide spans Ala530–Arg557 (removed in mature form).

It belongs to the glypican family. In terms of tissue distribution, highly expressed in developing brain and kidney.

The protein resides in the cell membrane. It localises to the secreted. It is found in the extracellular space. Functionally, cell surface proteoglycan that bears heparan sulfate. May be involved in the development of kidney tubules and of the central nervous system. The polypeptide is Glypican-4 (Gpc4) (Mus musculus (Mouse)).